Consider the following 350-residue polypeptide: UDP-N-acetylenolpyruvoylglucosamine reductase (350 aa).

The 172-residue stretch at histidine 24–leucine 195 folds into the FAD-binding PCMH-type domain. Residue arginine 172 is part of the active site. Catalysis depends on serine 245, which acts as the Proton donor. Glutamate 342 is a catalytic residue.

This sequence belongs to the MurB family. FAD serves as cofactor.

The protein resides in the cytoplasm. The enzyme catalyses UDP-N-acetyl-alpha-D-muramate + NADP(+) = UDP-N-acetyl-3-O-(1-carboxyvinyl)-alpha-D-glucosamine + NADPH + H(+). Its pathway is cell wall biogenesis; peptidoglycan biosynthesis. Cell wall formation. The sequence is that of UDP-N-acetylenolpyruvoylglucosamine reductase from Xanthomonas campestris pv. campestris (strain B100).